The chain runs to 465 residues: Sodium-dependent phosphate transport protein 1 (465 aa).

Residues Asn39, Asn47, and Asn56 are each glycosylated (N-linked (GlcNAc...) asparagine). A run of 10 helical transmembrane segments spans residues 79 to 99 (GLVL…VGYL), 117 to 137 (SVLS…VIVC), 176 to 196 (FVMG…LLGW), 199 to 219 (VFYI…ILLF), 260 to 280 (LPLW…NLLV), 299 to 319 (GLLS…AGQM), 337 to 357 (LFTT…LYLS), 363 to 383 (TVIF…GQLI), 399 to 419 (VTAL…GLIL), and 431 to 451 (FFLM…FAKG).

The protein belongs to the major facilitator superfamily. Sodium/anion cotransporter family. As to quaternary structure, interacts with PDZK1.

Its subcellular location is the apical cell membrane. It carries out the reaction 3 Na(+)(out) + phosphate(out) = 3 Na(+)(in) + phosphate(in). The catalysed reaction is urate(out) = urate(in). Functionally, important for the resorption of phosphate by the kidney. May be involved in actively transporting phosphate into cells via Na(+) cotransport in the renal brush border membrane. Plays a role in urate transport in the kidney. The sequence is that of Sodium-dependent phosphate transport protein 1 (Slc17a1) from Rattus norvegicus (Rat).